Consider the following 237-residue polypeptide: F-box only protein 50 (237 aa).

Residues 31–231 (VFETKPFERN…VTDSSVIVKA (201 aa)) enclose the FBA domain. Residues 40-82 (NLLQNPSPYGVNHTVPPPEPHRSGIPPPSDRPPQLEPEGNFSG) form a disordered region. Over residues 64 to 74 (IPPPSDRPPQL) the composition is skewed to pro residues.

In terms of tissue distribution, expressed in nonspecific cytotoxic cells (NCC).

The protein resides in the cytoplasm. May promote cell proliferation. The sequence is that of F-box only protein 50 (nccrp1) from Danio rerio (Zebrafish).